The primary structure comprises 311 residues: Tryptophan 2,3-dioxygenase (311 aa).

Residues 1-37 (MQPPGGDAPAGCPFSGARAAQPAQAAHEAPHVPGEAD) form a disordered region. Positions 17 to 27 (ARAAQPAQAAH) are enriched in low complexity. Residues 80–84 (FIIQH), tyrosine 142, and arginine 146 each bind substrate. Heme is bound at residue histidine 269. Threonine 283 serves as a coordination point for substrate.

This sequence belongs to the tryptophan 2,3-dioxygenase family. As to quaternary structure, homotetramer. The cofactor is heme.

The catalysed reaction is L-tryptophan + O2 = N-formyl-L-kynurenine. The protein operates within amino-acid degradation; L-tryptophan degradation via kynurenine pathway; L-kynurenine from L-tryptophan: step 1/2. Functionally, heme-dependent dioxygenase that catalyzes the oxidative cleavage of the L-tryptophan (L-Trp) pyrrole ring and converts L-tryptophan to N-formyl-L-kynurenine. Catalyzes the oxidative cleavage of the indole moiety. This Burkholderia cenocepacia (strain ATCC BAA-245 / DSM 16553 / LMG 16656 / NCTC 13227 / J2315 / CF5610) (Burkholderia cepacia (strain J2315)) protein is Tryptophan 2,3-dioxygenase.